The chain runs to 164 residues: UBA-like domain-containing protein 2 (164 aa).

N-acetylserine is present on Ser2. Residues 144–164 (PPGASQGGAPQKAMAAMDGQR) are disordered.

The protein belongs to the UBALD family.

In Mus musculus (Mouse), this protein is UBA-like domain-containing protein 2 (Ubald2).